We begin with the raw amino-acid sequence, 334 residues long: Protein-methionine-sulfoxide reductase catalytic subunit MsrP (334 aa).

A signal peptide (tat-type signal) is located at residues 1–44 (MKKVSRLTEADVTAESAFFMQRRQVLKALGITTAALSLPTAAHA). Mo-molybdopterin contacts are provided by residues Asn88, 91 to 92 (YE), Cys146, Thr181, Asn233, Arg238, and 249 to 251 (GIK).

It belongs to the MsrP family. In terms of assembly, heterodimer of a catalytic subunit (MsrP) and a heme-binding subunit (MsrQ). Mo-molybdopterin serves as cofactor. Post-translationally, predicted to be exported by the Tat system. The position of the signal peptide cleavage has not been experimentally proven.

The protein resides in the periplasm. The enzyme catalyses L-methionyl-[protein] + a quinone + H2O = L-methionyl-(S)-S-oxide-[protein] + a quinol. It catalyses the reaction L-methionyl-[protein] + a quinone + H2O = L-methionyl-(R)-S-oxide-[protein] + a quinol. Its function is as follows. Part of the MsrPQ system that repairs oxidized periplasmic proteins containing methionine sulfoxide residues (Met-O), using respiratory chain electrons. Thus protects these proteins from oxidative-stress damage caused by reactive species of oxygen and chlorine generated by the host defense mechanisms. MsrPQ is essential for the maintenance of envelope integrity under bleach stress, rescuing a wide series of structurally unrelated periplasmic proteins from methionine oxidation. The catalytic subunit MsrP is non-stereospecific, being able to reduce both (R-) and (S-) diastereoisomers of methionine sulfoxide. This chain is Protein-methionine-sulfoxide reductase catalytic subunit MsrP, found in Cronobacter sakazakii (strain ATCC BAA-894) (Enterobacter sakazakii).